We begin with the raw amino-acid sequence, 294 residues long: uncharacterized protein (294 aa).

Positions 1-19 (MFKRSLFILLLLAASLVKA) are cleaved as a signal peptide.

This is an uncharacterized protein from Rickettsia felis (strain ATCC VR-1525 / URRWXCal2) (Rickettsia azadi).